The chain runs to 453 residues: 3-phosphoshikimate 1-carboxyvinyltransferase (453 aa).

The segment at 1-25 (MSHDSEPQPVTAHPAGPLTGALKPP) is disordered. Residues Lys28, Ser29, and Arg33 each contribute to the 3-phosphoshikimate site. Residue Lys28 coordinates phosphoenolpyruvate. Phosphoenolpyruvate is bound by residues Gly101 and Arg129. 3-phosphoshikimate-binding residues include Ser175, Gln177, Asp330, and Lys357. Residue Gln177 participates in phosphoenolpyruvate binding. Asp330 acts as the Proton acceptor in catalysis. Phosphoenolpyruvate is bound by residues Arg361 and Arg405.

It belongs to the EPSP synthase family. As to quaternary structure, monomer.

It localises to the cytoplasm. It catalyses the reaction 3-phosphoshikimate + phosphoenolpyruvate = 5-O-(1-carboxyvinyl)-3-phosphoshikimate + phosphate. It functions in the pathway metabolic intermediate biosynthesis; chorismate biosynthesis; chorismate from D-erythrose 4-phosphate and phosphoenolpyruvate: step 6/7. Catalyzes the transfer of the enolpyruvyl moiety of phosphoenolpyruvate (PEP) to the 5-hydroxyl of shikimate-3-phosphate (S3P) to produce enolpyruvyl shikimate-3-phosphate and inorganic phosphate. The sequence is that of 3-phosphoshikimate 1-carboxyvinyltransferase from Methylorubrum populi (strain ATCC BAA-705 / NCIMB 13946 / BJ001) (Methylobacterium populi).